The sequence spans 668 residues: MKSYEIALIGNPNVGKSTIFNALTGENVYIGNWPGVTVEKKEGEFEYNGEKFKVVDLPGVYSLTANSIDEIIARDYIINEKPDLVVNIVDATALERNLYLTLQLMEMGANLLLALNKMDLAKSLGIEIDVDKLEKILGVKVVPLSAAKKMGIEDLKKAISIAVKDKKTAEIKYPNFEPYIKKITSILQKDEDLKKYNLRYLAIKLLENDKYVEEIVKNSKVWNELKPVLDSIINELSKKYGEAELGIVEERYKVIDKIVKEVMKKTSGKLTTTEMLDDVLTDEKIGTLLIIPFLWMLFKFTFDVSKPFSAMIEYFFGFLSEVVKSSISNKFIASLLADGIISGVGAVLVFFPILAFLFFAISFLEDSGYMARIPFITDRIMNKFGLPGKAVISMVMGFGCNVPAIMATRTIEDEKDRILTILINPLLSCSARLPIYALFAGALFSKYQGVVILSMYALGVVLALITAFLFRKLIFKTSPSYLIVELPPYHIPHLNVVLKNTWERVYDFLRKAGTIIVFGVILVWVLSVYGPSGYLGEEVFENPQLIANSWVAVIGKTLAPLFSPMGWDWRACSALVFGIIAKEVVVGSLAMLYGTGEENLSSVIAHAFSPVSAYAFMAFSLIYLPCIATLAVIKQEIGWKWALFAVTYEMILAYVVALVISVIGNLLF.

The 163-residue stretch at 3-165 (SYEIALIGNP…KKAISIAVKD (163 aa)) folds into the FeoB-type G domain. 10–17 (GNPNVGKS) lines the GTP pocket. Mg(2+)-binding residues include Asn-21, Ala-22, Thr-24, and Gly-25. GTP contacts are provided by residues 35–39 (GVTVE), 56–59 (DLPG), 116–119 (NKMD), and 145–147 (SAA). 8 helical membrane-spanning segments follow: residues 344 to 364 (VGAV…ISFL), 386 to 406 (LPGK…PAIM), 418 to 438 (ILTI…IYAL), 450 to 470 (VVIL…AFLF), 515 to 535 (IIVF…SGYL), 574 to 594 (ALVF…MLYG), 613 to 633 (AYAF…LAVI), and 643 to 663 (LFAV…ISVI).

Belongs to the TRAFAC class TrmE-Era-EngA-EngB-Septin-like GTPase superfamily. FeoB GTPase (TC 9.A.8) family. The crystallized N-terminal domain is a homodimer.

The protein localises to the cell membrane. In terms of biological role, probable transporter of a GTP-driven Fe(2+) uptake system, might be able to transport Fe(2+) into or out of the cell. This is Fe(2+) transporter FeoB from Methanocaldococcus jannaschii (strain ATCC 43067 / DSM 2661 / JAL-1 / JCM 10045 / NBRC 100440) (Methanococcus jannaschii).